A 452-amino-acid chain; its full sequence is Bifunctional protein GlmU (452 aa).

The interval Met1–Arg226 is pyrophosphorylase. UDP-N-acetyl-alpha-D-glucosamine is bound by residues Leu8–Gly11, Lys22, Gln73, Gly78–Thr79, Tyr100–Asp102, Gly137, Glu151, Asn166, and Asn224. Asp102 serves as a coordination point for Mg(2+). Asn224 contacts Mg(2+). The tract at residues Ile227–Asn247 is linker. An N-acetyltransferase region spans residues Gly248–Lys452. UDP-N-acetyl-alpha-D-glucosamine contacts are provided by Arg330 and Lys348. His360 (proton acceptor) is an active-site residue. UDP-N-acetyl-alpha-D-glucosamine is bound by residues Tyr363 and Asn374. Residues Ala377, Asn383–Tyr384, Ser402, Ala420, and Arg437 each bind acetyl-CoA.

The protein in the N-terminal section; belongs to the N-acetylglucosamine-1-phosphate uridyltransferase family. This sequence in the C-terminal section; belongs to the transferase hexapeptide repeat family. In terms of assembly, homotrimer. Mg(2+) is required as a cofactor.

The protein localises to the cytoplasm. It catalyses the reaction alpha-D-glucosamine 1-phosphate + acetyl-CoA = N-acetyl-alpha-D-glucosamine 1-phosphate + CoA + H(+). It carries out the reaction N-acetyl-alpha-D-glucosamine 1-phosphate + UTP + H(+) = UDP-N-acetyl-alpha-D-glucosamine + diphosphate. The protein operates within nucleotide-sugar biosynthesis; UDP-N-acetyl-alpha-D-glucosamine biosynthesis; N-acetyl-alpha-D-glucosamine 1-phosphate from alpha-D-glucosamine 6-phosphate (route II): step 2/2. It functions in the pathway nucleotide-sugar biosynthesis; UDP-N-acetyl-alpha-D-glucosamine biosynthesis; UDP-N-acetyl-alpha-D-glucosamine from N-acetyl-alpha-D-glucosamine 1-phosphate: step 1/1. Its pathway is bacterial outer membrane biogenesis; LPS lipid A biosynthesis. In terms of biological role, catalyzes the last two sequential reactions in the de novo biosynthetic pathway for UDP-N-acetylglucosamine (UDP-GlcNAc). The C-terminal domain catalyzes the transfer of acetyl group from acetyl coenzyme A to glucosamine-1-phosphate (GlcN-1-P) to produce N-acetylglucosamine-1-phosphate (GlcNAc-1-P), which is converted into UDP-GlcNAc by the transfer of uridine 5-monophosphate (from uridine 5-triphosphate), a reaction catalyzed by the N-terminal domain. This Pseudoalteromonas translucida (strain TAC 125) protein is Bifunctional protein GlmU.